A 348-amino-acid chain; its full sequence is UPF0324 membrane protein BPP3732 (348 aa).

The next 10 helical transmembrane spans lie at 20–39 (GILFVALMAAAVVQLADLPF), 43–62 (FGFSPLVVGIVCGMLYGNFL), 98–120 (IAAVGLPGLAVSVGVVASTLLIG), 135–157 (AMLTAAGSAICGAAAVLAFEPTL), 164–186 (SAVAVATVVLFGTLSMFLYPVIY), 196–215 (QALGIYIGGTVHEVAQVVGA), 235–257 (VALLVPVLLVLGFWLRASAAAGA), 267–286 (VPWFAIGFLVLAIVNSLDIL), 299–318 (VFVLTMAMTALGIETRFAQI), and 322–344 (GPRVMALGLVLYAWLVFGGYGIV).

The protein belongs to the UPF0324 family.

It localises to the cell membrane. This is UPF0324 membrane protein BPP3732 from Bordetella parapertussis (strain 12822 / ATCC BAA-587 / NCTC 13253).